The primary structure comprises 168 residues: Acetolactate synthase small subunit (168 aa).

One can recognise an ACT domain in the interval 7-82 (TLSVLVEDKP…VIKIVEQDDE (76 aa)).

It belongs to the acetolactate synthase small subunit family. Dimer of large and small chains.

The catalysed reaction is 2 pyruvate + H(+) = (2S)-2-acetolactate + CO2. The protein operates within amino-acid biosynthesis; L-isoleucine biosynthesis; L-isoleucine from 2-oxobutanoate: step 1/4. It functions in the pathway amino-acid biosynthesis; L-valine biosynthesis; L-valine from pyruvate: step 1/4. This Mycobacterium bovis (strain ATCC BAA-935 / AF2122/97) protein is Acetolactate synthase small subunit (ilvH).